The sequence spans 157 residues: Transcriptional repressor NrdR (157 aa).

Positions 1 to 26 are disordered; that stretch reads MRCPKCGGSKSSVIDSRQAEDGNTIR. Residues 3 to 34 fold into a zinc finger; that stretch reads CPKCGGSKSSVIDSRQAEDGNTIRRRRECEDC. Basic and acidic residues predominate over residues 17–26; it reads RQAEDGNTIR. The ATP-cone domain occupies 49–139; that stretch reads LVVVKKDGTR…VYRSFKDVGE (91 aa).

This sequence belongs to the NrdR family. Requires Zn(2+) as cofactor.

Negatively regulates transcription of bacterial ribonucleotide reductase nrd genes and operons by binding to NrdR-boxes. In Streptococcus gordonii (strain Challis / ATCC 35105 / BCRC 15272 / CH1 / DL1 / V288), this protein is Transcriptional repressor NrdR.